The chain runs to 187 residues: Potassium-transporting ATPase KdpC subunit (187 aa).

The helical transmembrane segment at 11–31 (LILLMTVVTGALYPLAVTGIA) threads the bilayer.

It belongs to the KdpC family. The system is composed of three essential subunits: KdpA, KdpB and KdpC.

The protein localises to the cell inner membrane. Its function is as follows. Part of the high-affinity ATP-driven potassium transport (or Kdp) system, which catalyzes the hydrolysis of ATP coupled with the electrogenic transport of potassium into the cytoplasm. This subunit acts as a catalytic chaperone that increases the ATP-binding affinity of the ATP-hydrolyzing subunit KdpB by the formation of a transient KdpB/KdpC/ATP ternary complex. This is Potassium-transporting ATPase KdpC subunit from Pseudomonas entomophila (strain L48).